We begin with the raw amino-acid sequence, 263 residues long: MEDLDHEYKNYWETTMFFQNQELEFDSWPMEEAFSGSGESSSPDGAATSPASSKNVVSERNRRQKLNQRLFALRSVVPNISKLDKASVIKDSIDYMQELIDQEKTLEAEIRELESRSTLLENPVRDYDCNFAETHLQDFSDNNDMRSKKFKQMDYSTRVQHYPIEVLEMKVTWMGEKTVVVCITCSKKRETMVQLCKVLESLNLNILTTNFSSFTSRLSTTLFLQVTLSLSPSLISLFGNVITSTNYKILNASREYCTCLVLV.

Residues 32–47 (EAFSGSGESSSPDGAA) show a composition bias toward low complexity. Positions 32–61 (EAFSGSGESSSPDGAATSPASSKNVVSERN) are disordered. The segment covering 49–58 (SPASSKNVVS) has biased composition (polar residues). Positions 50–99 (PASSKNVVSERNRRQKLNQRLFALRSVVPNISKLDKASVIKDSIDYMQEL) constitute a bHLH domain.

Homodimer. As to expression, expressed constitutively in roots, leaves, stems, and flowers.

The protein localises to the nucleus. The protein is Transcription factor bHLH27 (BHLH27) of Arabidopsis thaliana (Mouse-ear cress).